The primary structure comprises 194 residues: dTTP/UTP pyrophosphatase (194 aa).

Residue Asp73 is the Proton acceptor of the active site.

It belongs to the Maf family. YhdE subfamily. The cofactor is a divalent metal cation.

The protein localises to the cytoplasm. It catalyses the reaction dTTP + H2O = dTMP + diphosphate + H(+). The catalysed reaction is UTP + H2O = UMP + diphosphate + H(+). Nucleoside triphosphate pyrophosphatase that hydrolyzes dTTP and UTP. May have a dual role in cell division arrest and in preventing the incorporation of modified nucleotides into cellular nucleic acids. This is dTTP/UTP pyrophosphatase from Clostridium botulinum (strain ATCC 19397 / Type A).